Consider the following 461-residue polypeptide: tRNA modification GTPase MnmE (461 aa).

(6S)-5-formyl-5,6,7,8-tetrahydrofolate-binding residues include R23, E88, and R127. Residues G223–F383 form the TrmE-type G domain. A K(+)-binding site is contributed by N233. GTP is bound by residues N233–S238, T252–T258, and D277–G280. S237 is a Mg(2+) binding site. 3 residues coordinate K(+): T252, I254, and T257. Position 258 (T258) interacts with Mg(2+). K461 is a (6S)-5-formyl-5,6,7,8-tetrahydrofolate binding site.

Belongs to the TRAFAC class TrmE-Era-EngA-EngB-Septin-like GTPase superfamily. TrmE GTPase family. In terms of assembly, homodimer. Heterotetramer of two MnmE and two MnmG subunits. It depends on K(+) as a cofactor.

It is found in the cytoplasm. Functionally, exhibits a very high intrinsic GTPase hydrolysis rate. Involved in the addition of a carboxymethylaminomethyl (cmnm) group at the wobble position (U34) of certain tRNAs, forming tRNA-cmnm(5)s(2)U34. This chain is tRNA modification GTPase MnmE, found in Clostridium botulinum (strain Langeland / NCTC 10281 / Type F).